A 519-amino-acid polypeptide reads, in one-letter code: uncharacterized protein (519 aa).

Transmembrane regions (helical) follow at residues 37–57 (ISMS…AQLM), 82–102 (GQLS…ILIA), 114–134 (MFVL…FSYY), 146–166 (ALTG…LGRV), 175–195 (LIFA…SVFS), 209–229 (WTTA…IPHI), 240–260 (FDYL…FSWN), 269–289 (VPYV…FVLV), 309–329 (CVLI…YYLW), 337–357 (FATP…GCAA), 373–393 (IMVV…TAPI), 402–422 (FVSI…ATLM), 434–454 (IAAS…LGIA), and 475–495 (AWYM…LTVF).

The protein belongs to the major facilitator superfamily.

Its subcellular location is the endoplasmic reticulum. It is found in the membrane. This is an uncharacterized protein from Schizosaccharomyces pombe (strain 972 / ATCC 24843) (Fission yeast).